Here is a 233-residue protein sequence, read N- to C-terminus: Flagellar calcium-binding protein TB-17 (233 aa).

Polar residues predominate over residues 1 to 11 (MGCSGSKNASN). The disordered stretch occupies residues 1 to 29 (MGCSGSKNASNPKDGAASKGGKDGKTTAD). Residues 20–29 (GGKDGKTTAD) are compositionally biased toward basic and acidic residues. 3 EF-hand domains span residues 48-83 (ESKS…ILKL), 130-165 (YDIF…LKEW), and 167-202 (VDIT…KKLQ). The Ca(2+) site is built by D61, N63, T65, K67, E72, D143, D145, S147, E154, D180, N182, S184, and E191. The interval 203–233 (VSGDPDDEENGANEGDGANAGDGVPAAEGSA) is disordered. Residues 214–225 (ANEGDGANAGDG) show a composition bias toward low complexity.

It belongs to the calflagin family.

It is found in the cell projection. The protein resides in the cilium. The protein localises to the flagellum. Its function is as follows. May contribute to the rapid motility of the trypanosomes, playing a role either in flagellar structure or in calcium metabolism. Could alternate between a GDP-bound inactive form to a calcium/GTP-bound active form. The sequence is that of Flagellar calcium-binding protein TB-17 (FCABP) from Trypanosoma brucei brucei.